We begin with the raw amino-acid sequence, 376 residues long: Queuine tRNA-ribosyltransferase (376 aa).

The active-site Proton acceptor is D93. Residues 93–97 (DSGGF), D147, Q190, and G217 each bind substrate. The segment at 248 to 254 (GVGTPDD) is RNA binding. The Nucleophile role is filled by D267. The segment at 272–276 (TRSGR) is RNA binding; important for wobble base 34 recognition.

This sequence belongs to the queuine tRNA-ribosyltransferase family. Homodimer. Within each dimer, one monomer is responsible for RNA recognition and catalysis, while the other monomer binds to the replacement base PreQ1.

It carries out the reaction 7-aminomethyl-7-carbaguanine + guanosine(34) in tRNA = 7-aminomethyl-7-carbaguanosine(34) in tRNA + guanine. It participates in tRNA modification; tRNA-queuosine biosynthesis. Its function is as follows. Catalyzes the base-exchange of a guanine (G) residue with the queuine precursor 7-aminomethyl-7-deazaguanine (PreQ1) at position 34 (anticodon wobble position) in tRNAs with GU(N) anticodons (tRNA-Asp, -Asn, -His and -Tyr). Catalysis occurs through a double-displacement mechanism. The nucleophile active site attacks the C1' of nucleotide 34 to detach the guanine base from the RNA, forming a covalent enzyme-RNA intermediate. The proton acceptor active site deprotonates the incoming PreQ1, allowing a nucleophilic attack on the C1' of the ribose to form the product. After dissociation, two additional enzymatic reactions on the tRNA convert PreQ1 to queuine (Q), resulting in the hypermodified nucleoside queuosine (7-(((4,5-cis-dihydroxy-2-cyclopenten-1-yl)amino)methyl)-7-deazaguanosine). The sequence is that of Queuine tRNA-ribosyltransferase from Agrobacterium fabrum (strain C58 / ATCC 33970) (Agrobacterium tumefaciens (strain C58)).